The following is a 360-amino-acid chain: uncharacterized protein (360 aa).

3 Solcar repeats span residues 34–153 (VGVL…LSVW), 172–256 (PDWS…FKTN), and 266–355 (NPFV…FKFL). 6 consecutive transmembrane segments (helical) span residues 40 to 60 (VSAS…LDVV), 125 to 145 (LWSG…FYFT), 178 to 198 (AVAG…IEMI), 225 to 247 (ISSF…GIYW), 269 to 289 (VVSF…THPF), and 327 to 348 (FSSG…MISF).

The protein belongs to the mitochondrial carrier (TC 2.A.29) family.

Its subcellular location is the mitochondrion inner membrane. This is an uncharacterized protein from Caenorhabditis elegans.